The chain runs to 142 residues: MVLSPADKTNVKTAWGKVGGHGGEYGAEALERMFLSFPTTKTYFPHFDLSHGSAQVKGHGKKVADALTLAAAHVDDMPSALSALSDLHAHKLRVDPVNFKLLSHCLLVTLAAHHPAEFTPAVHASLDKFLASVSTVLTSKYR.

A Globin domain is found at 2-142 (VLSPADKTNV…VSTVLTSKYR (141 aa)). The residue at position 4 (S4) is a Phosphoserine. K8 carries the post-translational modification N6-succinyllysine. Residue T9 is modified to Phosphothreonine. Residue K12 is modified to N6-succinyllysine. K17 carries the post-translational modification N6-acetyllysine; alternate. K17 bears the N6-succinyllysine; alternate mark. A Phosphotyrosine modification is found at Y25. S36 is modified (phosphoserine). At K41 the chain carries N6-succinyllysine. S50 bears the Phosphoserine mark. H59 is a binding site for O2. H88 is a binding site for heme b. S103 carries the post-translational modification Phosphoserine. Position 109 is a phosphothreonine (T109). S125 and S132 each carry phosphoserine. 2 positions are modified to phosphothreonine: T135 and T138. The residue at position 139 (S139) is a Phosphoserine.

The protein belongs to the globin family. Heterotetramer of two alpha chains and two beta chains. Red blood cells.

Functionally, involved in oxygen transport from the lung to the various peripheral tissues. Hemopressin acts as an antagonist peptide of the cannabinoid receptor CNR1. Hemopressin-binding efficiently blocks cannabinoid receptor CNR1 and subsequent signaling. This Piliocolobus badius (Western red colobus) protein is Hemoglobin subunit alpha (HBA).